Here is a 282-residue protein sequence, read N- to C-terminus: Ribonuclease 3 (282 aa).

One can recognise an RNase III domain in the interval 18-141; that stretch reads FVAFFKSLNI…LVAAIYEDLG (124 aa). Glutamate 59 is a Mg(2+) binding site. Aspartate 63 is a catalytic residue. Mg(2+)-binding residues include aspartate 127 and glutamate 130. Glutamate 130 is an active-site residue.

The protein belongs to the ribonuclease III family. As to quaternary structure, homodimer. It depends on Mg(2+) as a cofactor.

It localises to the cytoplasm. The enzyme catalyses Endonucleolytic cleavage to 5'-phosphomonoester.. Digests double-stranded RNA. Involved in the processing of primary rRNA transcript to yield the immediate precursors to the large and small rRNAs (23S and 16S). Processes some mRNAs, and tRNAs when they are encoded in the rRNA operon. Processes pre-crRNA and tracrRNA of type II CRISPR loci if present in the organism. The polypeptide is Ribonuclease 3 (Mycoplasmoides pneumoniae (strain ATCC 15531 / DSM 23978 / CIP 103766 / NBRC 14401 / NCTC 10119 / FH) (Mycoplasma pneumoniae)).